We begin with the raw amino-acid sequence, 154 residues long: 17.8 kDa class I heat shock protein (154 aa).

One can recognise a sHSP domain in the interval 40–154 (ESSAFANTRI…PEVKSIEISG (115 aa)).

The protein belongs to the small heat shock protein (HSP20) family. As to quaternary structure, forms oligomeric structures.

The protein localises to the cytoplasm. This chain is 17.8 kDa class I heat shock protein, found in Solanum lycopersicum (Tomato).